The chain runs to 256 residues: Thiazole synthase (256 aa).

Residue K95 is the Schiff-base intermediate with DXP of the active site. 1-deoxy-D-xylulose 5-phosphate is bound by residues G156, A182–G183, and N204–T205.

It belongs to the ThiG family. Homotetramer. Forms heterodimers with either ThiH or ThiS.

Its subcellular location is the cytoplasm. It catalyses the reaction [ThiS sulfur-carrier protein]-C-terminal-Gly-aminoethanethioate + 2-iminoacetate + 1-deoxy-D-xylulose 5-phosphate = [ThiS sulfur-carrier protein]-C-terminal Gly-Gly + 2-[(2R,5Z)-2-carboxy-4-methylthiazol-5(2H)-ylidene]ethyl phosphate + 2 H2O + H(+). It functions in the pathway cofactor biosynthesis; thiamine diphosphate biosynthesis. In terms of biological role, catalyzes the rearrangement of 1-deoxy-D-xylulose 5-phosphate (DXP) to produce the thiazole phosphate moiety of thiamine. Sulfur is provided by the thiocarboxylate moiety of the carrier protein ThiS. In vitro, sulfur can be provided by H(2)S. The chain is Thiazole synthase from Escherichia coli O8 (strain IAI1).